Here is a 566-residue protein sequence, read N- to C-terminus: DNA ligase B (566 aa).

Lysine 125 serves as the catalytic N6-AMP-lysine intermediate.

Belongs to the NAD-dependent DNA ligase family. LigB subfamily.

The catalysed reaction is NAD(+) + (deoxyribonucleotide)n-3'-hydroxyl + 5'-phospho-(deoxyribonucleotide)m = (deoxyribonucleotide)n+m + AMP + beta-nicotinamide D-nucleotide.. In terms of biological role, catalyzes the formation of phosphodiester linkages between 5'-phosphoryl and 3'-hydroxyl groups in double-stranded DNA using NAD as a coenzyme and as the energy source for the reaction. The protein is DNA ligase B of Pseudomonas putida (strain GB-1).